A 481-amino-acid polypeptide reads, in one-letter code: Docking protein 1 (481 aa).

The residue at position 1 (methionine 1) is an N-acetylmethionine. Residues 4 to 119 enclose the PH domain; it reads AVMEGPLFLQ…WVQTLCRNAF (116 aa). Residue serine 48 is modified to Phosphoserine. One can recognise an IRS-type PTB domain in the interval 151-259; it reads EGSQFWVTVQ…HRQKAQGKAG (109 aa). Serine 269 and serine 291 each carry phosphoserine. The segment at 270–293 is disordered; it reads HEGEVAEGKLPSPPGPQELLDSPP. Tyrosine 296 is modified (phosphotyrosine). The tract at residues 307-329 is disordered; sequence PCPSQDSLYSDPLDSTSAQAGEG. Residues 310-325 show a composition bias toward polar residues; sequence SQDSLYSDPLDSTSAQ. Tyrosine 337 and tyrosine 341 each carry phosphotyrosine. Phosphotyrosine; by INSR is present on tyrosine 362. Tyrosine 377 is modified (phosphotyrosine). Tyrosine 398 bears the Phosphotyrosine; by INSR mark. A disordered region spans residues 404–481; it reads PATDDYAVPP…KTGVKSEGST (78 aa). The residue at position 409 (tyrosine 409) is a Phosphotyrosine. The residue at position 416 (serine 416) is a Phosphoserine. A compositionally biased stretch (polar residues) spans 436-458; it reads ATGSGIKSHNSALYSQVQKSGAS. Residue tyrosine 449 is modified to Phosphotyrosine. Serine 460 carries the phosphoserine modification.

It belongs to the DOK family. Type A subfamily. Interacts with ABL1. Interacts with RasGAP and INPP5D/SHIP1. Interacts directly with phosphorylated ITGB3. Interacts with SRMS (via the SH2 and SH3 domains). Constitutively tyrosine-phosphorylated. Phosphorylated by TEC. Phosphorylated by LYN. Phosphorylated on tyrosine residues by the insulin receptor kinase. Results in the negative regulation of the insulin signaling pathway. Phosphorylated on tyrosine residues by SRMS. Expressed in pancreas, heart, leukocyte and spleen. Expressed in both resting and activated peripheral blood T-cells. Expressed in breast cancer.

The protein resides in the cytoplasm. Its subcellular location is the nucleus. The protein localises to the perinuclear region. DOK proteins are enzymatically inert adaptor or scaffolding proteins. They provide a docking platform for the assembly of multimolecular signaling complexes. DOK1 appears to be a negative regulator of the insulin signaling pathway. Modulates integrin activation by competing with talin for the same binding site on ITGB3. This chain is Docking protein 1 (DOK1), found in Homo sapiens (Human).